Here is a 287-residue protein sequence, read N- to C-terminus: ATP synthase gamma chain (287 aa).

It belongs to the ATPase gamma chain family. In terms of assembly, F-type ATPases have 2 components, CF(1) - the catalytic core - and CF(0) - the membrane proton channel. CF(1) has five subunits: alpha(3), beta(3), gamma(1), delta(1), epsilon(1). CF(0) has three main subunits: a, b and c.

It localises to the cell membrane. Its function is as follows. Produces ATP from ADP in the presence of a proton gradient across the membrane. The gamma chain is believed to be important in regulating ATPase activity and the flow of protons through the CF(0) complex. The chain is ATP synthase gamma chain from Halothermothrix orenii (strain H 168 / OCM 544 / DSM 9562).